The sequence spans 437 residues: Putative galacturan 1,4-alpha-galacturonidase A (437 aa).

An N-terminal signal peptide occupies residues 1–20; sequence MKLSGSSALLLLGFGLLGHA. Residues N30, N101, N110, N161, N196, and N203 are each glycosylated (N-linked (GlcNAc...) asparagine). Residues 222 to 243 form a PbH1 1 repeat; sequence SDHVTITNWVYEGGDDAVAFKP. The active-site Proton donor is the D236. N-linked (GlcNAc...) asparagine glycosylation is found at N244, N252, N278, N324, N352, N371, N382, and N387. PbH1 repeat units follow at residues 245 to 265, 276 to 302, and 322 to 343; these read STNI…AFGS, VENI…YFKS, and VRNV…YIDT. C396 and C402 form a disulfide bridge.

It belongs to the glycosyl hydrolase 28 family.

The protein localises to the secreted. It catalyses the reaction [(1-&gt;4)-alpha-D-galacturonosyl](n) + H2O = alpha-D-galacturonate + [(1-&gt;4)-alpha-D-galacturonosyl](n-1). Functionally, specific in hydrolyzing the terminal glycosidic bond of polygalacturonic acid and oligogalacturonates. The polypeptide is Putative galacturan 1,4-alpha-galacturonidase A (rgxA) (Aspergillus flavus (strain ATCC 200026 / FGSC A1120 / IAM 13836 / NRRL 3357 / JCM 12722 / SRRC 167)).